An 89-amino-acid chain; its full sequence is MAASSRAQVLRLYRALLRESQRFSSYNYRTYAIRRIRDAFRENKNIADSEKIEELLNKAKANLEVIQRQGTIDHMYATEKLIIERPGNT.

Residues 44–71 (KNIADSEKIEELLNKAKANLEVIQRQGT) adopt a coiled-coil conformation.

It belongs to the complex I LYR family.

It localises to the mitochondrion. Its subcellular location is the nucleus. The protein operates within cofactor biosynthesis; iron-sulfur cluster biosynthesis. Its function is as follows. Required for nuclear and mitochondrial iron-sulfur protein biosynthesis. In Taeniopygia guttata (Zebra finch), this protein is LYR motif-containing protein 4 (LYRM4).